The following is a 573-amino-acid chain: Dihydroxy-acid dehydratase (573 aa).

The segment covering 1–14 (MTEKSPKPHKRSDA) has biased composition (basic and acidic residues). The disordered stretch occupies residues 1 to 21 (MTEKSPKPHKRSDAITEGPNR). Cysteine 55 is a [2Fe-2S] cluster binding site. Residue aspartate 87 participates in Mg(2+) binding. Cysteine 128 contributes to the [2Fe-2S] cluster binding site. Aspartate 129 and lysine 130 together coordinate Mg(2+). Lysine 130 carries the N6-carboxylysine modification. A [2Fe-2S] cluster-binding site is contributed by cysteine 200. Position 450 (glutamate 450) interacts with Mg(2+). Serine 476 serves as the catalytic Proton acceptor.

It belongs to the IlvD/Edd family. As to quaternary structure, homodimer. Requires [2Fe-2S] cluster as cofactor. It depends on Mg(2+) as a cofactor.

The enzyme catalyses (2R)-2,3-dihydroxy-3-methylbutanoate = 3-methyl-2-oxobutanoate + H2O. It carries out the reaction (2R,3R)-2,3-dihydroxy-3-methylpentanoate = (S)-3-methyl-2-oxopentanoate + H2O. It participates in amino-acid biosynthesis; L-isoleucine biosynthesis; L-isoleucine from 2-oxobutanoate: step 3/4. It functions in the pathway amino-acid biosynthesis; L-valine biosynthesis; L-valine from pyruvate: step 3/4. Functions in the biosynthesis of branched-chain amino acids. Catalyzes the dehydration of (2R,3R)-2,3-dihydroxy-3-methylpentanoate (2,3-dihydroxy-3-methylvalerate) into 2-oxo-3-methylpentanoate (2-oxo-3-methylvalerate) and of (2R)-2,3-dihydroxy-3-methylbutanoate (2,3-dihydroxyisovalerate) into 2-oxo-3-methylbutanoate (2-oxoisovalerate), the penultimate precursor to L-isoleucine and L-valine, respectively. The sequence is that of Dihydroxy-acid dehydratase from Koribacter versatilis (strain Ellin345).